Consider the following 257-residue polypeptide: Type III pantothenate kinase (257 aa).

Residue 6-13 participates in ATP binding; the sequence is DSGNTNTV. Position 108–111 (108–111) interacts with substrate; it reads GADR. Catalysis depends on Asp110, which acts as the Proton acceptor. Asp130 contributes to the K(+) binding site. Thr133 is a binding site for ATP. Position 185 (Thr185) interacts with substrate.

It belongs to the type III pantothenate kinase family. As to quaternary structure, homodimer. NH4(+) is required as a cofactor. The cofactor is K(+).

It is found in the cytoplasm. The catalysed reaction is (R)-pantothenate + ATP = (R)-4'-phosphopantothenate + ADP + H(+). The protein operates within cofactor biosynthesis; coenzyme A biosynthesis; CoA from (R)-pantothenate: step 1/5. Catalyzes the phosphorylation of pantothenate (Pan), the first step in CoA biosynthesis. This is Type III pantothenate kinase from Rhodospirillum rubrum (strain ATCC 11170 / ATH 1.1.1 / DSM 467 / LMG 4362 / NCIMB 8255 / S1).